Here is a 268-residue protein sequence, read N- to C-terminus: NADH-quinone oxidoreductase subunit B 1 (268 aa).

Residues cysteine 42, cysteine 43, cysteine 108, and cysteine 138 each coordinate [4Fe-4S] cluster.

This sequence belongs to the complex I 20 kDa subunit family. As to quaternary structure, NDH-1 is composed of 14 different subunits. Subunits NuoB, C, D, E, F, and G constitute the peripheral sector of the complex. [4Fe-4S] cluster serves as cofactor.

The protein localises to the cell membrane. The enzyme catalyses a quinone + NADH + 5 H(+)(in) = a quinol + NAD(+) + 4 H(+)(out). NDH-1 shuttles electrons from NADH, via FMN and iron-sulfur (Fe-S) centers, to quinones in the respiratory chain. The immediate electron acceptor for the enzyme in this species is believed to be ubiquinone. Couples the redox reaction to proton translocation (for every two electrons transferred, four hydrogen ions are translocated across the cytoplasmic membrane), and thus conserves the redox energy in a proton gradient. This is NADH-quinone oxidoreductase subunit B 1 from Roseiflexus sp. (strain RS-1).